A 173-amino-acid polypeptide reads, in one-letter code: Insertion element IS150 protein InsJ (173 aa).

It belongs to the IS150/IS1296 orfA family.

In Escherichia coli (strain K12), this protein is Insertion element IS150 protein InsJ (insJ).